Consider the following 466-residue polypeptide: Na(+)/H(+) antiporter NhaA (466 aa).

Helical transmembrane passes span 32-52 (VGGVLLLLAAITALIWANVPA), 74-94 (LSVQHWAADGLLAVFFFVAGI), 111-131 (AALPVAAALCGMAVPALVYTL), 142-162 (GWAVPTATDIAFALAVLAVIG), 172-192 (FLLTLAVVDDLFAILIIAVFF), 195-215 (DLNFAALAGAVIGLAVFWLLL), 221-241 (GWYVYVPLALVIWGLMYNSGI), 280-300 (GLAVPLFALFSAGVVISGGAL), 310-330 (LGVVLGLVVGKAIGIFGGTWL), 348-368 (VFAVASLAGIGFTVSLLIGEL), and 379-399 (EVKAAVLTGSLLAALIATTLL).

Belongs to the NhaA Na(+)/H(+) (TC 2.A.33) antiporter family.

The protein localises to the cell membrane. It carries out the reaction Na(+)(in) + 2 H(+)(out) = Na(+)(out) + 2 H(+)(in). Its function is as follows. Na(+)/H(+) antiporter that extrudes sodium in exchange for external protons. The polypeptide is Na(+)/H(+) antiporter NhaA (Streptomyces avermitilis (strain ATCC 31267 / DSM 46492 / JCM 5070 / NBRC 14893 / NCIMB 12804 / NRRL 8165 / MA-4680)).